The sequence spans 236 residues: Sugar fermentation stimulation protein homolog (236 aa).

It belongs to the SfsA family.

This chain is Sugar fermentation stimulation protein homolog, found in Synechococcus elongatus (strain ATCC 33912 / PCC 7942 / FACHB-805) (Anacystis nidulans R2).